A 270-amino-acid chain; its full sequence is MTDERDDTPATVTQNPWQALRRLTPARIALGRAGVSLPTRPQLAFQAAHAQARDAVHLPFDPAALQAQLHAQGHATLLLHSAARDRDQYLQRPDLGRQLDAPSAQLLGDHAAAHPGGVDIALVVADGLSALAVHRHAAPLIAGVAEGVRAQGWSMAPIALVEQGRVAVADEVGERLGARMVVILIGERPGLSSPDSLGLYFTYAPRVGLTDAARNCISNVRPEGLGYAAAAHKLLYLMREAWRRQGSGVLLKEAAEVPLLEAGRRNFLLD.

Residues Val-166, Glu-187, and Cys-216 each contribute to the adenosylcob(III)alamin site.

The protein belongs to the EutC family. In terms of assembly, the basic unit is a heterodimer which dimerizes to form tetramers. The heterotetramers trimerize; 6 large subunits form a core ring with 6 small subunits projecting outwards. Adenosylcob(III)alamin serves as cofactor.

Its subcellular location is the bacterial microcompartment. The enzyme catalyses ethanolamine = acetaldehyde + NH4(+). It participates in amine and polyamine degradation; ethanolamine degradation. Catalyzes the deamination of various vicinal amino-alcohols to oxo compounds. Allows this organism to utilize ethanolamine as the sole source of nitrogen and carbon in the presence of external vitamin B12. This Ralstonia nicotianae (strain ATCC BAA-1114 / GMI1000) (Ralstonia solanacearum) protein is Ethanolamine ammonia-lyase small subunit.